Here is a 332-residue protein sequence, read N- to C-terminus: 5,10-methylenetetrahydromethanopterin reductase (332 aa).

It belongs to the mer family.

The protein resides in the cytoplasm. The enzyme catalyses 5-methyl-5,6,7,8-tetrahydromethanopterin + oxidized coenzyme F420-(gamma-L-Glu)(n) + H(+) = 5,10-methylenetetrahydromethanopterin + reduced coenzyme F420-(gamma-L-Glu)(n). It functions in the pathway metabolic intermediate metabolism; lactate oxidation. In terms of biological role, catalyzes the oxidation of methyl-H(4)MPT to methylene-H(4)MPT. This is 5,10-methylenetetrahydromethanopterin reductase from Archaeoglobus fulgidus (strain ATCC 49558 / DSM 4304 / JCM 9628 / NBRC 100126 / VC-16).